Reading from the N-terminus, the 166-residue chain is Large ribosomal subunit protein uL10 (166 aa).

As to quaternary structure, part of the ribosomal stalk of the 50S ribosomal subunit. The N-terminus interacts with L11 and 23S rRNA to form the base of the stalk. The C-terminus forms an elongated spine to which L12 dimers bind in a sequential fashion forming a pentameric L10(L12)2(L12)2 complex.

Its function is as follows. Forms part of the ribosomal stalk, playing a central role in the interaction of the ribosome with GTP-bound translation factors (such as IF-2, EF-Tu, EF-G and RF3). This is Large ribosomal subunit protein uL10 (rplJ) from Bacillus subtilis (strain 168).